We begin with the raw amino-acid sequence, 291 residues long: Nucleoid occlusion protein (291 aa).

A DNA-binding region (H-T-H motif) is located at residues E155–L174.

It belongs to the ParB family.

It is found in the cytoplasm. It localises to the nucleoid. Functionally, effects nucleoid occlusion by binding relatively nonspecifically to DNA and preventing the assembly of the division machinery in the vicinity of the nucleoid, especially under conditions that disturb the cell cycle. It helps to coordinate cell division and chromosome segregation by preventing the formation of the Z ring through the nucleoid, which would cause chromosome breakage. The polypeptide is Nucleoid occlusion protein (Bacillus pumilus (strain SAFR-032)).